We begin with the raw amino-acid sequence, 426 residues long: UPF0597 protein CLI_1810 (426 aa).

It belongs to the UPF0597 family.

In Clostridium botulinum (strain Langeland / NCTC 10281 / Type F), this protein is UPF0597 protein CLI_1810.